A 556-amino-acid chain; its full sequence is Formate--tetrahydrofolate ligase (556 aa).

65–72 is a binding site for ATP; it reads TPAGEGKS.

This sequence belongs to the formate--tetrahydrofolate ligase family.

The enzyme catalyses (6S)-5,6,7,8-tetrahydrofolate + formate + ATP = (6R)-10-formyltetrahydrofolate + ADP + phosphate. The protein operates within one-carbon metabolism; tetrahydrofolate interconversion. The chain is Formate--tetrahydrofolate ligase from Streptococcus equi subsp. zooepidemicus (strain H70).